A 569-amino-acid chain; its full sequence is Putative diguanylate cyclase DgcQ (569 aa).

2 helical membrane passes run 25–45 (LGPGHVVNLCFIVVLLFSTLL) and 365–385 (IALTLLWALFTTMLLLSWYVI). Positions 433–568 (HPFSVIQVDL…GRNRVFASDN (136 aa)) constitute a GGDEF domain. Asp-441 contributes to the Mg(2+) binding site. Substrate contacts are provided by Asn-449, His-454, and Asp-458. Mg(2+) is bound at residue Glu-484. Catalysis depends on Glu-484, which acts as the Proton acceptor.

In terms of assembly, homodimer. Requires Mg(2+) as cofactor.

The protein localises to the cell inner membrane. It carries out the reaction 2 GTP = 3',3'-c-di-GMP + 2 diphosphate. Its pathway is glycan metabolism; bacterial cellulose biosynthesis. It functions in the pathway purine metabolism; 3',5'-cyclic di-GMP biosynthesis. Its function is as follows. Catalyzes the synthesis of cyclic-di-GMP (c-di-GMP) via the condensation of 2 GTP molecules. Cyclic-di-GMP is a second messenger which controls cell surface-associated traits in bacteria. Involved in the regulation of cellulose production. This chain is Putative diguanylate cyclase DgcQ, found in Shigella flexneri.